A 126-amino-acid polypeptide reads, in one-letter code: MNYNDPLEPAMIITKVLSKSDIVGNVVLPKAEVMSVLTRMNVNDQDLLNGVEVQVDDIMEDDLYTVTLKVSGIDKPKYYFGTGWSTMKHSLDLSEGDVLKLYWSHLDNKFVVLNFQYSVLPLMIPV.

Residues 20–118 (SDIVGNVVLP…KFVVLNFQYS (99 aa)) constitute a DNA-binding region (TF-B3).

It localises to the nucleus. The chain is B3 domain-containing protein At5g54067 from Arabidopsis thaliana (Mouse-ear cress).